The sequence spans 1537 residues: Histone-lysine N-methyltransferase, H3 lysine-79 specific (1537 aa).

Residues 16–330 form the DOT1 domain; sequence EPAVYPWPLP…ILENYFSSLK (315 aa). S-adenosyl-L-methionine is bound by residues 136-139, 159-168, glutamate 186, and 222-223; these read YGET, FVDLGSGVGQ, and DF. A Phosphoserine modification is found at serine 297. Residues 334-350 are compositionally biased toward basic and acidic residues; that stretch reads LREEQEAARRRQQRESK. Residues 334-467 are disordered; that stretch reads LREEQEAARR…SPFYQLPPSV (134 aa). Serine 374 carries the phosphoserine modification. The tract at residues 391 to 416 is required for interaction with nucleosomes and DNA; the sequence is PSKARKKKLNKKGRKMAGRKRGRPKK. Residues 393–416 show a composition bias toward basic residues; it reads KARKKKLNKKGRKMAGRKRGRPKK. The span at 439–450 shows a compositional bias: polar residues; it reads QTVSQTAASSPQ. 2 positions are modified to phosphoserine: serine 448 and serine 471. Threonine 480 is modified (phosphothreonine). Serine 775 and serine 786 each carry phosphoserine. Disordered regions lie at residues 785-853, 893-912, 957-1128, and 1145-1243; these read LSQD…LRER, RAERARSTPSPVLQPRDPSS, TPGA…LNLN, and SPET…KWKS. Residues 800–809 show a composition bias toward basic and acidic residues; that stretch reads LHSRAEHTKE. Serine 826 is modified (phosphoserine). Serine 834 is subject to Phosphoserine; by MAPK11. Residues 844–853 are compositionally biased toward basic and acidic residues; the sequence is KSSEKGLRER. Composition is skewed to polar residues over residues 899–912, 966–986, and 994–1010; these read STPSPVLQPRDPSS, DESSSSGSLFATVGSRSSTPQ, and PRNSLPASPAHQLSSSP. Phosphothreonine; by MAPK11 is present on threonine 900. Serine 902 bears the Phosphoserine; by MAPK11 mark. Threonine 984 carries the phosphothreonine; by MAPK11 modification. A Phosphoserine modification is found at serine 997. Serine 1001 and serine 1009 each carry phosphoserine; by MAPK11. At serine 1035 the chain carries Phosphoserine. The span at 1048–1068 shows a compositional bias: polar residues; it reads TITTGAGSAKQSPSSKHSPLT. Serine 1093 bears the Phosphoserine mark. Serine 1104 carries the post-translational modification Phosphoserine; by MAPK11. A compositionally biased stretch (polar residues) spans 1118–1128; sequence TQPSGSPLNLN. Over residues 1158–1171 the composition is skewed to basic and acidic residues; that stretch reads QDHDQPPVLKKERP. The segment covering 1172 to 1184 has biased composition (polar residues); it reads LSQTNGAHYSPLT. Acidic residues predominate over residues 1185–1195; the sequence is SDEEPGSEDEP. Residues serine 1213 and serine 1246 each carry the phosphoserine modification. Positions 1334–1410 are disordered; it reads GASLPHKGPE…DKTPLLSGKA (77 aa).

The protein belongs to the class I-like SAM-binding methyltransferase superfamily. DOT1 family. In terms of assembly, interacts with MLLT10.

The protein resides in the nucleus. The enzyme catalyses L-lysyl(79)-[histone H3] + 3 S-adenosyl-L-methionine = N(6),N(6),N(6)-trimethyl-L-lysyl(79)-[histone H3] + 3 S-adenosyl-L-homocysteine + 3 H(+). Histone methyltransferase. Methylates 'Lys-79' of histone H3. Nucleosomes are preferred as substrate compared to free histones. Binds to DNA. This chain is Histone-lysine N-methyltransferase, H3 lysine-79 specific, found in Homo sapiens (Human).